Consider the following 772-residue polypeptide: Lon protease (772 aa).

In terms of domain architecture, Lon N-terminal spans 6 to 200; it reads YPTLPLKNTV…LMHRYLNHEV (195 aa). 352 to 359 lines the ATP pocket; it reads GPPGVGKT. The Lon proteolytic domain occupies 588 to 769; that stretch reads QLAPGVAAGL…EEVLAEAIPD (182 aa). Active-site residues include Ser675 and Lys718.

This sequence belongs to the peptidase S16 family. As to quaternary structure, homohexamer. Organized in a ring with a central cavity.

It localises to the cytoplasm. The catalysed reaction is Hydrolysis of proteins in presence of ATP.. Functionally, ATP-dependent serine protease that mediates the selective degradation of mutant and abnormal proteins as well as certain short-lived regulatory proteins. Required for cellular homeostasis and for survival from DNA damage and developmental changes induced by stress. Degrades polypeptides processively to yield small peptide fragments that are 5 to 10 amino acids long. Binds to DNA in a double-stranded, site-specific manner. The protein is Lon protease of Nitrosococcus oceani (strain ATCC 19707 / BCRC 17464 / JCM 30415 / NCIMB 11848 / C-107).